The following is a 132-amino-acid chain: Small ribosomal subunit protein uS8c (132 aa).

Belongs to the universal ribosomal protein uS8 family. Part of the 30S ribosomal subunit.

It localises to the plastid. The protein resides in the chloroplast. One of the primary rRNA binding proteins, it binds directly to 16S rRNA central domain where it helps coordinate assembly of the platform of the 30S subunit. This is Small ribosomal subunit protein uS8c (rps8) from Spirogyra maxima (Green alga).